The chain runs to 1543 residues: Tubby-related protein 4 (1543 aa).

WD repeat units follow at residues 6-72 (EHGP…STPQ), 73-115 (RINF…YEGR), 116-158 (WSVE…SGQR), 159-237 (HWSS…SDDY), 238-276 (APPQ…YDDL), 277-334 (SPTV…GEHI), and 335-372 (FTLD…RVEH). Positions 364–414 (ALYVVRVEHRVSSLQLLCQQAIASTLREDKDVSKLTLPPRLCSYLSTAFIP) constitute an SOCS box domain. 2 disordered regions span residues 530–577 (SPKI…SVGS) and 829–850 (TKIN…TAAP). A Phosphoserine modification is found at Ser-577. Arg-945 and Arg-950 each carry asymmetric dimethylarginine. Disordered regions lie at residues 1004-1058 (SPRA…HTAS), 1326-1355 (VPQR…AITE), and 1367-1453 (DFNS…ASEK). The span at 1036 to 1050 (TCSQCSGTGPSSQPG) shows a compositional bias: polar residues. Basic and acidic residues predominate over residues 1329–1347 (RTEKFGKKNRKRLDSRAEE). Phosphoserine is present on residues Ser-1343 and Ser-1374. Residues 1443-1453 (EEAKCRRASEK) are compositionally biased toward basic and acidic residues. The interval 1466 to 1543 (VMANKQPLWN…ALANVTQRLK (78 aa)) is TUB.

Belongs to the TUB family. Expressed mainly in the brain, skeletal muscle, testis and kidney.

It localises to the cytoplasm. Its pathway is protein modification; protein ubiquitination. Functionally, may be a substrate-recognition component of a SCF-like ECS (Elongin-Cullin-SOCS-box protein) E3 ubiquitin ligase complex which mediates the ubiquitination and subsequent proteasomal degradation of target proteins. The polypeptide is Tubby-related protein 4 (TULP4) (Homo sapiens (Human)).